The sequence spans 220 residues: MFQRLSSLFFSTPSPPEDPDCPRAFVSEEDEVDGWLIIDLPDSYAAPPSPGAAPAPAGRPPPAPSLMDESWFVTPPACFTAEGPGLGPARLQSSPLEDLLIEHPSMSVYVTGSTIVLEPGSPSPLPDAALPDGDLSEGELTPARREPRAARHAAPLPARAALLEKAGQVRRLQRARQRAERHALSAKAVQRQNRARESRPRRSKNQSSFIYQPCQRQFNY.

A compositionally biased stretch (low complexity) spans 1–12 (MFQRLSSLFFST). Disordered stretches follow at residues 1–24 (MFQR…CPRA), 41–69 (PDSY…LMDE), and 119–220 (PGSP…QFNY). A Phosphoserine modification is found at S14. An LIR motif is present at residues 26-41 (VSEEDEVDGWLIIDLP). Over residues 47-64 (PPSPGAAPAPAGRPPPAP) the composition is skewed to pro residues. S136 is subject to Phosphoserine. Over residues 152 to 170 (HAAPLPARAALLEKAGQVR) the composition is skewed to low complexity. Over residues 205-220 (NQSSFIYQPCQRQFNY) the composition is skewed to polar residues.

Interacts with VMP1, GABARAP, GABARAPL1, GABARAPL2, MAP1LC3A, MAP1LC3B, MAP1LC3C and THRA.

The protein resides in the cytoplasm. The protein localises to the cytosol. It is found in the nucleus. Its subcellular location is the PML body. It localises to the cytoplasmic vesicle. The protein resides in the autophagosome. Functionally, dual regulator of transcription and autophagy. Positively regulates autophagy and is required for autophagosome formation and processing. May act as a scaffold protein that recruits MAP1LC3A, GABARAP and GABARAPL2 and brings them to the autophagosome membrane by interacting with VMP1 where, in cooperation with the BECN1-PI3-kinase class III complex, they trigger autophagosome development. Acts as a transcriptional activator of THRA. In Homo sapiens (Human), this protein is Tumor protein p53-inducible nuclear protein 2 (TP53INP2).